The following is a 72-amino-acid chain: Movement protein TGBp3 (72 aa).

The Lumenal portion of the chain corresponds to 1 to 2 (MS). Residues 3–23 (LSFSLIVFAVGVAVSIGVLTL) form a helical membrane-spanning segment. The Cytoplasmic portion of the chain corresponds to 24–72 (TTQQSSSYCLILVDGAKAVVEGCHLRQDIPAILSELKPASSPFNPLFCS).

This sequence belongs to the Tymovirales TGBp3 protein family.

Its subcellular location is the host endoplasmic reticulum membrane. In terms of biological role, plays a role in viral cell-to-cell propagation, by facilitating genome transport to neighboring plant cells through plasmosdesmata. May induce the formation of granular vesicles derived from the Endoplasmic reticulum, which align on actin filaments. This chain is Movement protein TGBp3 (ORF4), found in Lolium latent virus (isolate Lolium/USA/US1/-) (LoLV).